The primary structure comprises 196 residues: ATP-dependent Clp protease proteolytic subunit (196 aa).

The active-site Nucleophile is Ser101. His126 is an active-site residue.

The protein belongs to the peptidase S14 family. Component of the chloroplastic Clp protease core complex.

It is found in the plastid. Its subcellular location is the chloroplast stroma. The enzyme catalyses Hydrolysis of proteins to small peptides in the presence of ATP and magnesium. alpha-casein is the usual test substrate. In the absence of ATP, only oligopeptides shorter than five residues are hydrolyzed (such as succinyl-Leu-Tyr-|-NHMec, and Leu-Tyr-Leu-|-Tyr-Trp, in which cleavage of the -Tyr-|-Leu- and -Tyr-|-Trp bonds also occurs).. Its function is as follows. Cleaves peptides in various proteins in a process that requires ATP hydrolysis. Has a chymotrypsin-like activity. Plays a major role in the degradation of misfolded proteins. In Citrus sinensis (Sweet orange), this protein is ATP-dependent Clp protease proteolytic subunit.